The primary structure comprises 252 residues: Cyclic di-GMP binding protein VCA0042 (252 aa).

Residues 1 to 11 are compositionally biased toward basic and acidic residues; the sequence is MNSRPAEKIDN. Residues 1 to 24 are disordered; that stretch reads MNSRPAEKIDNNDGQTETPRSKTV. The segment covering 12-24 has biased composition (polar residues); it reads NDGQTETPRSKTV. One can recognise a PilZ domain in the interval 134 to 233; that stretch reads QLRKEPRFEL…EEGRNNAKNL (100 aa).

This sequence belongs to the YcgR family. Dimer.

It is found in the bacterial flagellum basal body. May act as a flagellar brake, regulating swimming and swarming in a bis-(3'-5') cyclic diguanylic acid (c-di-GMP)-dependent manner. Increasing levels of c-di-GMP lead to decreased motility (Potential). Binds bis-(3'-5') cyclic diguanylic acid (c-di-GMP) with a dissociation constant of 170 nM in the presence of 10 mM KCl and with 100 nM in its absence. Binds 1 to 2 c-di-GMP per subunit. Only 1 c-di-GMP is seen in the wild-type crystal, while 2 are seen in the mutant. Depending on the concentration of K(+) stoichiometries of 1:1, 1.43:1 and 2:1 are determined by isothermal titration calorimetry. The chain is Cyclic di-GMP binding protein VCA0042 from Vibrio cholerae serotype O1 (strain ATCC 39315 / El Tor Inaba N16961).